The following is a 106-amino-acid chain: Toxin-like structure LSTX-D9 (106 aa).

Residues 1 to 20 (MMKVLVVVALLLTLIIYSSS) form the signal peptide. Positions 21 to 41 (DGIDDLEADELVSLMAHEQTR) are excised as a propeptide. Intrachain disulfides connect Cys-45–Cys-60, Cys-52–Cys-69, Cys-59–Cys-85, and Cys-71–Cys-83.

This sequence belongs to the neurotoxin 19 (CSTX) family. 02 (D7) subfamily. Expressed by the venom gland.

It is found in the secreted. This is Toxin-like structure LSTX-D9 from Lycosa singoriensis (Wolf spider).